The primary structure comprises 101 residues: ATP synthase subunit c (101 aa).

The next 2 membrane-spanning stretches (helical) occupy residues 31–51 and 81–101; these read AFAY…GAGQ and AISE…IFVG.

It belongs to the ATPase C chain family. As to quaternary structure, F-type ATPases have 2 components, F(1) - the catalytic core - and F(0) - the membrane proton channel. F(1) has five subunits: alpha(3), beta(3), gamma(1), delta(1), epsilon(1). F(0) has three main subunits: a(1), b(2) and c(10-14). The alpha and beta chains form an alternating ring which encloses part of the gamma chain. F(1) is attached to F(0) by a central stalk formed by the gamma and epsilon chains, while a peripheral stalk is formed by the delta and b chains.

The protein resides in the cell membrane. Its function is as follows. F(1)F(0) ATP synthase produces ATP from ADP in the presence of a proton or sodium gradient. F-type ATPases consist of two structural domains, F(1) containing the extramembraneous catalytic core and F(0) containing the membrane proton channel, linked together by a central stalk and a peripheral stalk. During catalysis, ATP synthesis in the catalytic domain of F(1) is coupled via a rotary mechanism of the central stalk subunits to proton translocation. In terms of biological role, key component of the F(0) channel; it plays a direct role in translocation across the membrane. A homomeric c-ring of between 10-14 subunits forms the central stalk rotor element with the F(1) delta and epsilon subunits. This Mesomycoplasma hyopneumoniae (strain 232) (Mycoplasma hyopneumoniae) protein is ATP synthase subunit c.